Consider the following 230-residue polypeptide: uncharacterized protein (230 aa).

Residues 19–39 (GIFQVLLQLVLAMMTVWDFAG) form a helical membrane-spanning segment. Asn-41 carries an N-linked (GlcNAc...) asparagine; by host glycan. The helical transmembrane segment at 55 to 75 (SFLLVLYTGLKQILEYMFSIC) threads the bilayer. Residues Asn-86, Asn-157, Asn-168, and Asn-182 are each glycosylated (N-linked (GlcNAc...) asparagine; by host). A coiled-coil region spans residues 172-196 (TNLHKYQNDENDTEEDSEDIEKNSD). A disordered region spans residues 178-205 (QNDENDTEEDSEDIEKNSDPKENSDIDS). The span at 180-190 (DENDTEEDSED) shows a compositional bias: acidic residues. Basic and acidic residues predominate over residues 191–201 (IEKNSDPKENS).

The protein resides in the membrane. This is an uncharacterized protein from Acanthamoeba polyphaga mimivirus (APMV).